Reading from the N-terminus, the 648-residue chain is p-hydroxybenzoic acid efflux pump subunit AaeB (648 aa).

Helical transmembrane passes span 11 to 31 (FACK…YFGL), 41 to 61 (AALV…SGAI), 65 to 87 (GWLR…MLLI), 91 to 110 (LLMI…LSSL), 125 to 145 (TALI…QLAL), 150 to 170 (EIVL…PRSV), 369 to 389 (LFWL…IAVV), 406 to 426 (FLMG…LILP), 430 to 450 (QSLV…GMAV), 458 to 478 (MGTL…GFPI), and 481 to 501 (FVDS…VLLV).

The protein belongs to the aromatic acid exporter ArAE (TC 2.A.85) family.

Its subcellular location is the cell inner membrane. Its function is as follows. Forms an efflux pump with AaeA. Could function as a metabolic relief valve, allowing to eliminate certain compounds when they accumulate to high levels in the cell. This is p-hydroxybenzoic acid efflux pump subunit AaeB from Edwardsiella ictaluri (strain 93-146).